The following is a 311-amino-acid chain: Glutaminase (311 aa).

Substrate is bound by residues S66, N116, E162, N169, Y193, Y245, and V263.

It belongs to the glutaminase family. Homotetramer.

The enzyme catalyses L-glutamine + H2O = L-glutamate + NH4(+). This is Glutaminase from Rhodopseudomonas palustris (strain TIE-1).